The chain runs to 217 residues: 3-demethoxyubiquinol 3-hydroxylase (217 aa).

Residues Glu-66, Glu-96, His-99, Glu-148, Glu-180, and His-183 each coordinate Fe cation.

The protein belongs to the COQ7 family. The cofactor is Fe cation.

The protein localises to the cell membrane. It carries out the reaction a 5-methoxy-2-methyl-3-(all-trans-polyprenyl)benzene-1,4-diol + AH2 + O2 = a 3-demethylubiquinol + A + H2O. The protein operates within cofactor biosynthesis; ubiquinone biosynthesis. Catalyzes the hydroxylation of 2-nonaprenyl-3-methyl-6-methoxy-1,4-benzoquinol during ubiquinone biosynthesis. The protein is 3-demethoxyubiquinol 3-hydroxylase of Xanthomonas oryzae pv. oryzae (strain MAFF 311018).